Here is a 262-residue protein sequence, read N- to C-terminus: Purine nucleoside phosphorylase SSP1584 (262 aa).

Histidine 79, cysteine 124, and histidine 141 together coordinate Zn(2+).

Belongs to the purine nucleoside phosphorylase YfiH/LACC1 family. In terms of assembly, homodimer. Cu(2+) serves as cofactor. It depends on Zn(2+) as a cofactor.

It catalyses the reaction adenosine + phosphate = alpha-D-ribose 1-phosphate + adenine. It carries out the reaction S-methyl-5'-thioadenosine + phosphate = 5-(methylsulfanyl)-alpha-D-ribose 1-phosphate + adenine. The catalysed reaction is inosine + phosphate = alpha-D-ribose 1-phosphate + hypoxanthine. The enzyme catalyses adenosine + H2O + H(+) = inosine + NH4(+). Purine nucleoside enzyme that catalyzes the phosphorolysis of adenosine and inosine nucleosides, yielding D-ribose 1-phosphate and the respective free bases, adenine and hypoxanthine. Also catalyzes the phosphorolysis of S-methyl-5'-thioadenosine into adenine and S-methyl-5-thio-alpha-D-ribose 1-phosphate. Also has adenosine deaminase activity. The chain is Purine nucleoside phosphorylase SSP1584 from Staphylococcus saprophyticus subsp. saprophyticus (strain ATCC 15305 / DSM 20229 / NCIMB 8711 / NCTC 7292 / S-41).